The following is a 1243-amino-acid chain: Protein MMS22-like (1243 aa).

Belongs to the MMS22 family. MMS22L subfamily. In terms of assembly, component of the MMS22L-TONSL complex, a complex at least composed of MMS22L and TONSL/NFKBIL2. Interacts with RAD51; interaction is direct. In terms of processing, degraded by the ubiquitin-proteasome system upon replication stress.

The protein resides in the nucleus. It is found in the chromosome. Component of the MMS22L-TONSL complex, a complex that promotes homologous recombination-mediated repair of double-strand breaks (DSBs) at stalled or collapsed replication forks. The MMS22L-TONSL complex is required to maintain genome integrity during DNA replication. It mediates the assembly of RAD51 filaments on single-stranded DNA (ssDNA): the MMS22L-TONSL complex is recruited to DSBs following histone replacement by histone chaperones and eviction of the replication protein A complex (RPA/RP-A) from DSBs. Following recruitment to DSBs, the TONSL-MMS22L complex promotes recruitment of RAD51 filaments and subsequent homologous recombination. Within the complex, MMS22L acts by binding ssDNA. The sequence is that of Protein MMS22-like from Homo sapiens (Human).